Reading from the N-terminus, the 398-residue chain is 1-aminocyclopropane-1-carboxylate oxidase homolog 5 (398 aa).

In terms of domain architecture, Fe2OG dioxygenase spans Lys247–Thr347. Fe cation-binding residues include His271, Asp273, and His327. Arg338 lines the 2-oxoglutarate pocket.

Belongs to the iron/ascorbate-dependent oxidoreductase family. The cofactor is Fe(2+). As to expression, expressed in etiolated seedlings, leaves, stems and flowers.

This is 1-aminocyclopropane-1-carboxylate oxidase homolog 5 (2A6) from Arabidopsis thaliana (Mouse-ear cress).